We begin with the raw amino-acid sequence, 291 residues long: MPELPEVETVRRGLQPAMEGFRIDRAVAHRENLRFPLQKDFAARLTGQTVTGLGRRAKYLLADLSSGDVLLMHLGMSGSFRVIGADGETTPGEFHYPRSEDRTHDHVVFEMASGARVVFNDPRRFGFMKVFPRSEIETEPHLKGLGPEPLGNAFDASLLAKACAGKQTSLKAALLDQRVVAGLGNIYVCEALFRAHLSPKRKASTLANRKEEPTDHAVRLTEAIREVLGEAIKAGGSSLRDHRQTSGELGYFQHAFKVYDREGKPCPTCGGTVQRFVQNGRSTFWCPKCQK.

Pro2 functions as the Schiff-base intermediate with DNA in the catalytic mechanism. The Proton donor role is filled by Glu3. Lys58 functions as the Proton donor; for beta-elimination activity in the catalytic mechanism. Residues His104, Arg123, and Lys166 each coordinate DNA. The FPG-type zinc-finger motif lies at 257–291 (KVYDREGKPCPTCGGTVQRFVQNGRSTFWCPKCQK). Arg281 serves as the catalytic Proton donor; for delta-elimination activity.

It belongs to the FPG family. In terms of assembly, monomer. Requires Zn(2+) as cofactor.

It catalyses the reaction Hydrolysis of DNA containing ring-opened 7-methylguanine residues, releasing 2,6-diamino-4-hydroxy-5-(N-methyl)formamidopyrimidine.. It carries out the reaction 2'-deoxyribonucleotide-(2'-deoxyribose 5'-phosphate)-2'-deoxyribonucleotide-DNA = a 3'-end 2'-deoxyribonucleotide-(2,3-dehydro-2,3-deoxyribose 5'-phosphate)-DNA + a 5'-end 5'-phospho-2'-deoxyribonucleoside-DNA + H(+). Its function is as follows. Involved in base excision repair of DNA damaged by oxidation or by mutagenic agents. Acts as a DNA glycosylase that recognizes and removes damaged bases. Has a preference for oxidized purines, such as 7,8-dihydro-8-oxoguanine (8-oxoG). Has AP (apurinic/apyrimidinic) lyase activity and introduces nicks in the DNA strand. Cleaves the DNA backbone by beta-delta elimination to generate a single-strand break at the site of the removed base with both 3'- and 5'-phosphates. This chain is Formamidopyrimidine-DNA glycosylase, found in Rhodopseudomonas palustris (strain TIE-1).